Consider the following 215-residue polypeptide: Sodium channel regulatory subunit beta-3 (215 aa).

Residues 1 to 22 (MPAFNRLFPLVSLVLIYWASVC) form the signal peptide. Residues 23–156 (FPVCVEVPSE…EEAGEDFTSV (134 aa)) lie on the Extracellular side of the membrane. Positions 24 to 138 (PVCVEVPSET…EAHRPFVKTT (115 aa)) constitute an Ig-like C2-type domain. Intrachain disulfides connect Cys-26-Cys-48 and Cys-45-Cys-120. Residues Asn-95, Asn-109, Asn-113, and Asn-121 are each glycosylated (N-linked (GlcNAc...) asparagine). Residues 157 to 178 (VSEIMMYILLVFLTLWLLIEMI) traverse the membrane as a helical segment. Over 179-215 (YCYRKVSKAEEAAQENASDYLAIPSENKENSAVPVEE) the chain is Cytoplasmic.

The protein belongs to the sodium channel auxiliary subunit SCN3B (TC 8.A.17) family. A voltage-gated sodium (Nav) channel consists of an ion-conducting pore-forming alpha subunit functional on its own that is regulated by one or more beta subunits. Forms homodimers and homotrimers. SCN3B is non-covalently associated with alpha subunits and induces the formation of alpha subunit oligomers, including trimers. Interacts with SCN5A/Nav1.5; regulatory subunit of SCN5A/Nav1.5. Interacts with SCN7A/Nav2.1; probable regulatory subunit of SCN7A/Nav2.1. Interacts with SCN10A; regulatory subunit of SCN10A/Nav1.8. Interacts with NFASC; probably involved in targeting the sodium channels to the nodes of Ranvier. In terms of processing, intramolecular disulfide bonds favor the voltage-gated sodium channel oligomeric complex assembly. Post-translationally, N-glycosylated.

The protein localises to the cell membrane. Regulatory subunit of multiple voltage-gated sodium (Nav) channels directly mediating the depolarization of excitable membranes. Navs, also called VGSCs (voltage-gated sodium channels) or VDSCs (voltage-dependent sodium channels), operate by switching between closed and open conformations depending on the voltage difference across the membrane. In the open conformation they allow Na(+) ions to selectively pass through the pore, along their electrochemical gradient. The influx of Na+ ions provokes membrane depolarization, initiating the propagation of electrical signals throughout cells and tissues. The accessory beta subunits participate in localization and functional modulation of the Nav channels. Modulates the activity of SCN2A/Nav1.2, causing a hyperpolarizing shift in the voltage-dependence of inactivation of the channel and increasing the fraction of channels operating in the fast gating mode. Modulates the activity of SCN5A/Nav1.5. Could also regulate the atypical sodium channel SCN7A/Nav2.1. Modulates the activity of SCN10A/Nav1.8, regulating its oligomerization and accelerating the recovery from inactivation. This chain is Sodium channel regulatory subunit beta-3, found in Macaca fascicularis (Crab-eating macaque).